Consider the following 462-residue polypeptide: ATP synthase subunit beta (462 aa).

151–158 (GGAGVGKT) contributes to the ATP binding site.

This sequence belongs to the ATPase alpha/beta chains family. In terms of assembly, F-type ATPases have 2 components, CF(1) - the catalytic core - and CF(0) - the membrane proton channel. CF(1) has five subunits: alpha(3), beta(3), gamma(1), delta(1), epsilon(1). CF(0) has four main subunits: a(1), b(1), b'(1) and c(9-12).

Its subcellular location is the cell inner membrane. It carries out the reaction ATP + H2O + 4 H(+)(in) = ADP + phosphate + 5 H(+)(out). Functionally, produces ATP from ADP in the presence of a proton gradient across the membrane. The catalytic sites are hosted primarily by the beta subunits. The sequence is that of ATP synthase subunit beta from Chlorobium limicola (strain DSM 245 / NBRC 103803 / 6330).